Consider the following 134-residue polypeptide: Arginine decarboxylase proenzyme (134 aa).

Residue Ser82 is the Schiff-base intermediate with substrate; via pyruvic acid of the active site. A Pyruvic acid (Ser); by autocatalysis modification is found at Ser82. His87 acts as the Proton acceptor; for processing activity in catalysis. Residue Cys102 is the Proton donor; for catalytic activity of the active site.

It belongs to the prokaryotic AdoMetDC family. Type 1 subfamily. Heterooctamer of four alpha and four beta chains arranged as a tetramer of alpha/beta heterodimers. The cofactor is pyruvate. Is synthesized initially as an inactive proenzyme. Formation of the active enzyme involves a self-maturation process in which the active site pyruvoyl group is generated from an internal serine residue via an autocatalytic post-translational modification. Two non-identical subunits are generated from the proenzyme in this reaction, and the pyruvate is formed at the N-terminus of the alpha chain, which is derived from the carboxyl end of the proenzyme. The post-translation cleavage follows an unusual pathway, termed non-hydrolytic serinolysis, in which the side chain hydroxyl group of the serine supplies its oxygen atom to form the C-terminus of the beta chain, while the remainder of the serine residue undergoes an oxidative deamination to produce ammonia and the pyruvoyl group blocking the N-terminus of the alpha chain.

The enzyme catalyses L-arginine + H(+) = agmatine + CO2. It participates in amine and polyamine biosynthesis; agmatine biosynthesis; agmatine from L-arginine: step 1/1. Its activity is regulated as follows. Highly competitively inhibited by L-argininamide and L-arginine methyl ester. Also inhibited by alpha-difluoromethylarginine. Is not stimulated by potassium chloride as observed for other decarboxylases. Specifically catalyzes the decarboxylation of L-arginine to agmatine. Is also able to decarboxylate L-canavanine, although less efficiently. Has no S-adenosylmethionine decarboxylase (AdoMetDC) activity. In Saccharolobus solfataricus (strain ATCC 35092 / DSM 1617 / JCM 11322 / P2) (Sulfolobus solfataricus), this protein is Arginine decarboxylase proenzyme.